Here is an 87-residue protein sequence, read N- to C-terminus: Probable acyl carrier protein PigG (87 aa).

The region spanning 1-78 (MLESKLINHI…SMVALVQRLK (78 aa)) is the Carrier domain. At S36 the chain carries O-(pantetheine 4'-phosphoryl)serine.

The protein operates within antibiotic biosynthesis; prodigiosin biosynthesis. In terms of biological role, involved in the biosynthesis of 4-methoxy-2,2'-bipyrrole-5-carbaldehyde (MBC), one of the terminal products involved in the biosynthesis of the red antibiotic prodigiosin (Pig). Carrier of the L-prolyl group transferred from L-prolyl-AMP by PigI. The protein is Probable acyl carrier protein PigG of Serratia sp. (strain ATCC 39006) (Prodigiosinella confusarubida).